Reading from the N-terminus, the 193-residue chain is Xanthine phosphoribosyltransferase (193 aa).

L20 and T27 together coordinate xanthine. 128–132 serves as a coordination point for 5-phospho-alpha-D-ribose 1-diphosphate; that stretch reads ANGQA. K156 contacts xanthine.

Belongs to the purine/pyrimidine phosphoribosyltransferase family. Xpt subfamily. In terms of assembly, homodimer.

Its subcellular location is the cytoplasm. The enzyme catalyses XMP + diphosphate = xanthine + 5-phospho-alpha-D-ribose 1-diphosphate. Its pathway is purine metabolism; XMP biosynthesis via salvage pathway; XMP from xanthine: step 1/1. Functionally, converts the preformed base xanthine, a product of nucleic acid breakdown, to xanthosine 5'-monophosphate (XMP), so it can be reused for RNA or DNA synthesis. The polypeptide is Xanthine phosphoribosyltransferase (Streptococcus pneumoniae (strain P1031)).